The following is a 206-amino-acid chain: Small ribosomal subunit protein uS4 (206 aa).

Residues 96–156 (SRLDNIVYRL…KKSKNQLRIK (61 aa)) form the S4 RNA-binding domain.

It belongs to the universal ribosomal protein uS4 family. As to quaternary structure, part of the 30S ribosomal subunit. Contacts protein S5. The interaction surface between S4 and S5 is involved in control of translational fidelity.

One of the primary rRNA binding proteins, it binds directly to 16S rRNA where it nucleates assembly of the body of the 30S subunit. Functionally, with S5 and S12 plays an important role in translational accuracy. In Buchnera aphidicola subsp. Cinara cedri (strain Cc), this protein is Small ribosomal subunit protein uS4.